The sequence spans 327 residues: Clavesin-2 (327 aa).

Residues 96–257 (IKQALKDGFP…EFGGMLPPYD (162 aa)) form the CRAL-TRIO domain. The disordered stretch occupies residues 288-327 (VDKELSPKSMKRSQSVVDPTALKRMDKSEEENMQPLLSLD). At Ser-325 the chain carries Phosphoserine.

In terms of assembly, forms a complex with clathrin heavy chain and gamma-adaptin. Expressed in brain with no expression detected in non-neuronal tissues (at protein level).

It localises to the golgi apparatus. The protein resides in the trans-Golgi network membrane. It is found in the early endosome membrane. Its subcellular location is the cytoplasmic vesicle. The protein localises to the clathrin-coated vesicle. Its function is as follows. Required for normal morphology of late endosomes and/or lysosomes in neurons. Binds phosphatidylinositol 3,5-bisphosphate (PtdIns(3,5)P2). The protein is Clavesin-2 of Rattus norvegicus (Rat).